We begin with the raw amino-acid sequence, 326 residues long: Type II methyltransferase M.EcoRI (326 aa).

The protein belongs to the N(4)/N(6)-methyltransferase family. As to quaternary structure, monomer.

It carries out the reaction a 2'-deoxyadenosine in DNA + S-adenosyl-L-methionine = an N(6)-methyl-2'-deoxyadenosine in DNA + S-adenosyl-L-homocysteine + H(+). A methylase that recognizes the double-stranded sequence 5'-GAATTC-3', methylates A-3 on both strands, and protects the DNA from cleavage by the EcoRI endonuclease. The sequence is that of Type II methyltransferase M.EcoRI (ecoRIM) from Escherichia coli.